The chain runs to 444 residues: Serine--tRNA ligase (444 aa).

Thr248–Glu250 lines the L-serine pocket. Arg279–Glu281 is an ATP binding site. Glu302 provides a ligand contact to L-serine. An ATP-binding site is contributed by Glu366–Ser369. Ser401 lines the L-serine pocket.

The protein belongs to the class-II aminoacyl-tRNA synthetase family. Type-1 seryl-tRNA synthetase subfamily. As to quaternary structure, homodimer. The tRNA molecule binds across the dimer.

The protein localises to the cytoplasm. It catalyses the reaction tRNA(Ser) + L-serine + ATP = L-seryl-tRNA(Ser) + AMP + diphosphate + H(+). It carries out the reaction tRNA(Sec) + L-serine + ATP = L-seryl-tRNA(Sec) + AMP + diphosphate + H(+). It participates in aminoacyl-tRNA biosynthesis; selenocysteinyl-tRNA(Sec) biosynthesis; L-seryl-tRNA(Sec) from L-serine and tRNA(Sec): step 1/1. Its function is as follows. Catalyzes the attachment of serine to tRNA(Ser). Is also able to aminoacylate tRNA(Sec) with serine, to form the misacylated tRNA L-seryl-tRNA(Sec), which will be further converted into selenocysteinyl-tRNA(Sec). This chain is Serine--tRNA ligase, found in Polaromonas naphthalenivorans (strain CJ2).